The primary structure comprises 218 residues: Small ribosomal subunit protein uS3c (218 aa).

The KH type-2 domain maps to 47–118; sequence VQKNIRISSG…KLNIAITRIS (72 aa).

This sequence belongs to the universal ribosomal protein uS3 family. Part of the 30S ribosomal subunit.

The protein resides in the plastid. It is found in the chloroplast. The protein is Small ribosomal subunit protein uS3c (rps3) of Aethionema cordifolium (Lebanon stonecress).